The following is a 151-amino-acid chain: Deoxyuridine 5'-triphosphate nucleotidohydrolase (151 aa).

Substrate contacts are provided by residues 70-72, asparagine 83, 87-89, and methionine 97; these read RSG and LID.

The protein belongs to the dUTPase family. Homotrimer. The cofactor is Mg(2+).

It catalyses the reaction dUTP + H2O = dUMP + diphosphate + H(+). It functions in the pathway pyrimidine metabolism; dUMP biosynthesis; dUMP from dCTP (dUTP route): step 2/2. In terms of biological role, this enzyme is involved in nucleotide metabolism: it produces dUMP, the immediate precursor of thymidine nucleotides and it decreases the intracellular concentration of dUTP so that uracil cannot be incorporated into DNA. The chain is Deoxyuridine 5'-triphosphate nucleotidohydrolase from Escherichia coli O45:K1 (strain S88 / ExPEC).